Here is a 742-residue protein sequence, read N- to C-terminus: Feeding circuit activating peptides (742 aa).

A signal peptide spans 1 to 22 (MTFAASFRALLCVLFCAALVHC). Residues 23–98 (KTRTKRYVPH…YGALADRDVD (76 aa)) constitute a propeptide that is removed on maturation. The propeptide at 117 to 131 (GSLDAIPQDTDASSD) is connecting peptide. Propeptides lie at residues 164–168 (GSGAE), 202–220 (RGTGGQMHASSPRVVPWGS), 236–253 (DTELVENRQTTGQQTEVN), 271–275 (SGEAG), 293–297 (ADDQG), 315–321 (FDNSAGE), 339–341 (AGD), 359–366 (FDNDISGQ), 384–388 (SDQDN), 406–410 (ADDDG), 428–432 (ADEDD), 450–454 (GDEDD), 472–476 (ADEDD), 494–498 (SDEDD), 516–520 (SDEDD), 538–542 (ADEDD), 560–564 (NSPGL), 582–592 (NNEYYSGAENE), 610–614 (DQPGE), and 647–742 (NSAD…AGQM).

In terms of tissue distribution, expressed in pleural, pedal, abdominal, buccal and cerebral ganglia.

Its subcellular location is the secreted. In terms of biological role, initiates organized rhythmic motor output of feeding circuit. This is Feeding circuit activating peptides from Aplysia californica (California sea hare).